The following is a 135-amino-acid chain: Protein NrdI (135 aa).

It belongs to the NrdI family.

Its function is as follows. Probably involved in ribonucleotide reductase function. This Rhizobium johnstonii (strain DSM 114642 / LMG 32736 / 3841) (Rhizobium leguminosarum bv. viciae) protein is Protein NrdI.